The sequence spans 900 residues: Isoleucine--tRNA ligase (900 aa).

A 'HIGH' region motif is present at residues 59–69 (PYANGNIHMGH). L-isoleucyl-5'-AMP is bound at residue E550. The 'KMSKS' region signature appears at 591–595 (KMSKS). Residue K594 participates in ATP binding. Positions 876, 879, 892, and 895 each coordinate Zn(2+).

The protein belongs to the class-I aminoacyl-tRNA synthetase family. IleS type 1 subfamily. Monomer. Zn(2+) serves as cofactor.

It is found in the cytoplasm. It catalyses the reaction tRNA(Ile) + L-isoleucine + ATP = L-isoleucyl-tRNA(Ile) + AMP + diphosphate. In terms of biological role, catalyzes the attachment of isoleucine to tRNA(Ile). As IleRS can inadvertently accommodate and process structurally similar amino acids such as valine, to avoid such errors it has two additional distinct tRNA(Ile)-dependent editing activities. One activity is designated as 'pretransfer' editing and involves the hydrolysis of activated Val-AMP. The other activity is designated 'posttransfer' editing and involves deacylation of mischarged Val-tRNA(Ile). This chain is Isoleucine--tRNA ligase, found in Onion yellows phytoplasma (strain OY-M).